A 71-amino-acid polypeptide reads, in one-letter code: Natterin-P (71 aa).

Positions 1-18 (MKLLVLLVTLLVLSWTSA) are cleaved as a signal peptide. Residues 19–45 (EDLGDQEILENNEDNNHESELGEPAAQ) constitute a propeptide that is removed on maturation. Acidic residues predominate over residues 22-31 (GDQEILENNE). The disordered stretch occupies residues 22-54 (GDQEILENNEDNNHESELGEPAAQHTDDETSQL). A disulfide bridge connects residues Cys62 and Cys71.

It belongs to the natterin family. Expressed by the venom gland.

The protein localises to the secreted. With respect to regulation, inhibited by tissue-kallikrein inhibitor TKI and trasylol. Plasma kallikrein inhibitor PKSI527 and classical inhibitors of serine-, metallo-, thiol- or aspartate-peptidases evokes a minor inhibition of the peptide digestion. Shows nociceptive, edema-inducing and kininogenase activity with release of kallidin from low molecular weight kininogen. The cleavage occurs at Met-Lys bonds. This Thalassophryne nattereri (Copper Joe toadfish) protein is Natterin-P.